The chain runs to 591 residues: L-fucose isomerase (591 aa).

Residues Glu337 and Asp361 each act as proton acceptor in the active site. The Mn(2+) site is built by Glu337, Asp361, and His528.

It belongs to the L-fucose isomerase family. In terms of assembly, homohexamer. Mn(2+) is required as a cofactor.

It is found in the cytoplasm. The enzyme catalyses L-fucose = L-fuculose. The protein operates within carbohydrate degradation; L-fucose degradation; L-lactaldehyde and glycerone phosphate from L-fucose: step 1/3. Functionally, converts the aldose L-fucose into the corresponding ketose L-fuculose. The polypeptide is L-fucose isomerase (Shigella dysenteriae serotype 1 (strain Sd197)).